The chain runs to 385 residues: Lipid-A-disaccharide synthase (385 aa).

This sequence belongs to the LpxB family.

The enzyme catalyses 2-N,3-O-bis[(3R)-3-hydroxytetradecanoyl]-alpha-D-glucosaminyl 1-phosphate + UDP-2-N,3-O-bis[(3R)-3-hydroxytetradecanoyl]-alpha-D-glucosamine = lipid A disaccharide (E. coli) + UDP + H(+). It catalyses the reaction a lipid X + a UDP-2-N,3-O-bis[(3R)-3-hydroxyacyl]-alpha-D-glucosamine = a lipid A disaccharide + UDP + H(+). Its pathway is glycolipid biosynthesis; lipid IV(A) biosynthesis; lipid IV(A) from (3R)-3-hydroxytetradecanoyl-[acyl-carrier-protein] and UDP-N-acetyl-alpha-D-glucosamine: step 5/6. Functionally, condensation of UDP-2,3-diacylglucosamine and 2,3-diacylglucosamine-1-phosphate to form lipid A disaccharide, a precursor of lipid A, a phosphorylated glycolipid that anchors the lipopolysaccharide to the outer membrane of the cell. This chain is Lipid-A-disaccharide synthase, found in Wigglesworthia glossinidia brevipalpis.